The following is a 259-amino-acid chain: MDAWVRFSAQSQARERLCRAAQYACSLLGHALQRHGASPELQKQIRQLESHLSLGRKLLRLGNSADALESAKRAVHLSDVVLRFCITVSHLNRALYFACDNVLWAGKSGLAPRVDQEKWAQRSFRYYLFSLIMNLSRDAYEIRLLMEQESSACSRRLKGSGGGVPGGSETGGLGGPGTPGGGLPQLALKLRLQVLLLARVLRGHPPLLLDVVRNACDLFIPLDKLGLWRCGPGIVGLCGLVSSILSILTLIYPWLRLKP.

Lys-43 carries the post-translational modification N6-acetyllysine. Residues Leu-157–Pro-176 are disordered. The segment covering Gly-159–Pro-176 has biased composition (gly residues). The segment at Val-211 to Pro-259 is interaction with PEX19, PEX11G and FIS1 and peroxisome targeting. A helical transmembrane segment spans residues Gly-233–Leu-255.

It belongs to the peroxin-11 family. In terms of assembly, homodimer. Heterodimer with PEX11G. Interacts with PEX19. Interacts with FIS1.

It is found in the peroxisome membrane. Its function is as follows. Involved in peroxisomal proliferation. May regulate peroxisome division by recruiting the dynamin-related GTPase DNM1L to the peroxisomal membrane. Promotes membrane protrusion and elongation on the peroxisomal surface. In Homo sapiens (Human), this protein is Peroxisomal membrane protein 11B (PEX11B).